A 197-amino-acid chain; its full sequence is Thymidine kinase (197 aa).

Residues 15-22 (GPMFAGKT) and 93-96 (DEVQ) each bind ATP. The active-site Proton acceptor is Glu-94. Zn(2+) is bound by residues Cys-150, Cys-153, Cys-188, and His-191.

Belongs to the thymidine kinase family. In terms of assembly, homotetramer.

The protein resides in the cytoplasm. The catalysed reaction is thymidine + ATP = dTMP + ADP + H(+). The chain is Thymidine kinase from Thermococcus kodakarensis (strain ATCC BAA-918 / JCM 12380 / KOD1) (Pyrococcus kodakaraensis (strain KOD1)).